Reading from the N-terminus, the 61-residue chain is UPF0434 protein PFL_1779 (61 aa).

This sequence belongs to the UPF0434 family.

The sequence is that of UPF0434 protein PFL_1779 from Pseudomonas fluorescens (strain ATCC BAA-477 / NRRL B-23932 / Pf-5).